The sequence spans 404 residues: uncharacterized protein (404 aa).

It belongs to the lymphocryptovirus BTRF1 family.

This is an uncharacterized protein from Epstein-Barr virus (strain GD1) (HHV-4).